The primary structure comprises 301 residues: Sulfate adenylyltransferase subunit 2 (301 aa).

It belongs to the PAPS reductase family. CysD subfamily. Heterodimer composed of CysD, the smaller subunit, and CysN.

It catalyses the reaction sulfate + ATP + H(+) = adenosine 5'-phosphosulfate + diphosphate. The protein operates within sulfur metabolism; hydrogen sulfide biosynthesis; sulfite from sulfate: step 1/3. Functionally, with CysN forms the ATP sulfurylase (ATPS) that catalyzes the adenylation of sulfate producing adenosine 5'-phosphosulfate (APS) and diphosphate, the first enzymatic step in sulfur assimilation pathway. APS synthesis involves the formation of a high-energy phosphoric-sulfuric acid anhydride bond driven by GTP hydrolysis by CysN coupled to ATP hydrolysis by CysD. The polypeptide is Sulfate adenylyltransferase subunit 2 (Citrifermentans bemidjiense (strain ATCC BAA-1014 / DSM 16622 / JCM 12645 / Bem) (Geobacter bemidjiensis)).